Consider the following 1245-residue polypeptide: ATP-dependent helicase/nuclease subunit A (1245 aa).

The UvrD-like helicase ATP-binding domain occupies Thr-4–Arg-477. Ala-25–Thr-32 provides a ligand contact to ATP. Residues Lys-517–Gly-815 form the UvrD-like helicase C-terminal domain.

The protein belongs to the helicase family. AddA subfamily. In terms of assembly, heterodimer of AddA and AddB/RexB. The cofactor is Mg(2+).

The catalysed reaction is Couples ATP hydrolysis with the unwinding of duplex DNA by translocating in the 3'-5' direction.. The enzyme catalyses ATP + H2O = ADP + phosphate + H(+). Functionally, the heterodimer acts as both an ATP-dependent DNA helicase and an ATP-dependent, dual-direction single-stranded exonuclease. Recognizes the chi site generating a DNA molecule suitable for the initiation of homologous recombination. The AddA nuclease domain is required for chi fragment generation; this subunit has the helicase and 3' -&gt; 5' nuclease activities. The chain is ATP-dependent helicase/nuclease subunit A from Clostridium beijerinckii (strain ATCC 51743 / NCIMB 8052) (Clostridium acetobutylicum).